Reading from the N-terminus, the 142-residue chain is MGLSIGSLLICVFLGIVPFATANTNSSSYEEHRNYLLNIFHNPFVNDSIKEKNIPQLIAFYQRYPTDVPLSDADRQQFERFIHDYREYRAVLVDGAPPQGGSFGNIFGHFLGRVGTRYISSLFNKKREERKSNHAYIIEDYN.

The N-terminal stretch at 1–22 is a signal peptide; that stretch reads MGLSIGSLLICVFLGIVPFATA.

This sequence belongs to the Turandot family.

The protein localises to the secreted. Its function is as follows. A humoral factor that may play a role in stress tolerance. The protein is Protein Turandot X of Drosophila melanogaster (Fruit fly).